A 122-amino-acid polypeptide reads, in one-letter code: MARLNSKAVAAAVVLAAVVLMMAGREASAALSCGQVDSKLAPCVAYVTGRASSISKECCSGVQGLNGLARSSPDRKIACRCLKSLATSIKSINMGKVSGVPGKCGVSVPFPISMSTNCNNVN.

Positions 1 to 29 are cleaved as a signal peptide; that stretch reads MARLNSKAVAAAVVLAAVVLMMAGREASA. Disulfide bonds link Cys33-Cys81, Cys43-Cys58, Cys59-Cys104, and Cys79-Cys118.

Belongs to the plant LTP family. In terms of tissue distribution, expressed in phloem. Also detected in the epidermis near the vascular tissues in resistant plants infected by Hessian fly larvae.

Plant non-specific lipid-transfer proteins transfer phospholipids as well as galactolipids across membranes. May play a role in wax or cutin deposition in the cell walls of expanding epidermal cells and certain secretory tissues. This Triticum aestivum (Wheat) protein is Probable non-specific lipid-transfer protein 3 (LTP3).